Here is a 162-residue protein sequence, read N- to C-terminus: Cytochrome c-type biogenesis protein CcmE (162 aa).

Over 1–8 (MNPVRKKR) the chain is Cytoplasmic. A helical; Signal-anchor for type II membrane protein membrane pass occupies residues 9–29 (LIIVLAIVVGVGAAVGLALSA). The Periplasmic segment spans residues 30–162 (LQQNINLFYT…GETSYNQEGK (133 aa)). Heme-binding residues include histidine 124 and tyrosine 128. Basic and acidic residues predominate over residues 139–148 (DSGQLKHYEN). Residues 139 to 162 (DSGQLKHYENGKAAGETSYNQEGK) are disordered.

The protein belongs to the CcmE/CycJ family.

It is found in the cell inner membrane. Functionally, heme chaperone required for the biogenesis of c-type cytochromes. Transiently binds heme delivered by CcmC and transfers the heme to apo-cytochromes in a process facilitated by CcmF and CcmH. This chain is Cytochrome c-type biogenesis protein CcmE, found in Pseudomonas aeruginosa (strain LESB58).